The sequence spans 339 residues: UDP-N-acetylenolpyruvoylglucosamine reductase (339 aa).

One can recognise an FAD-binding PCMH-type domain in the interval 18-189; the sequence is GIDVRARLLA…LRVRLRLTRR (172 aa). Arginine 166 is an active-site residue. Catalysis depends on serine 239, which acts as the Proton donor. Glutamate 335 is an active-site residue.

Belongs to the MurB family. It depends on FAD as a cofactor.

The protein resides in the cytoplasm. It carries out the reaction UDP-N-acetyl-alpha-D-muramate + NADP(+) = UDP-N-acetyl-3-O-(1-carboxyvinyl)-alpha-D-glucosamine + NADPH + H(+). It functions in the pathway cell wall biogenesis; peptidoglycan biosynthesis. Cell wall formation. This chain is UDP-N-acetylenolpyruvoylglucosamine reductase, found in Pseudomonas aeruginosa (strain ATCC 15692 / DSM 22644 / CIP 104116 / JCM 14847 / LMG 12228 / 1C / PRS 101 / PAO1).